The chain runs to 212 residues: HTH-type transcriptional repressor KstR (212 aa).

Residues M1 to T11 are compositionally biased toward low complexity. The segment at M1–K28 is disordered. Residues K28 to I88 form the HTH tetR-type domain. The H-T-H motif DNA-binding region spans Q51–F70.

In terms of assembly, homodimer.

In terms of biological role, controls the expression of genes used for utilizing diverse lipids as energy sources. In Rhodococcus jostii (strain RHA1), this protein is HTH-type transcriptional repressor KstR (kstR).